Here is a 232-residue protein sequence, read N- to C-terminus: 5'-methylthioadenosine/S-adenosylhomocysteine nucleosidase (232 aa).

Residue Glu12 is the Proton acceptor of the active site. Substrate contacts are provided by residues Gly78, Ile152, and 173–174; that span reads ME. Asp197 functions as the Proton donor in the catalytic mechanism.

It belongs to the PNP/UDP phosphorylase family. MtnN subfamily. As to quaternary structure, homodimer.

The catalysed reaction is S-adenosyl-L-homocysteine + H2O = S-(5-deoxy-D-ribos-5-yl)-L-homocysteine + adenine. The enzyme catalyses S-methyl-5'-thioadenosine + H2O = 5-(methylsulfanyl)-D-ribose + adenine. It catalyses the reaction 5'-deoxyadenosine + H2O = 5-deoxy-D-ribose + adenine. Its pathway is amino-acid biosynthesis; L-methionine biosynthesis via salvage pathway; S-methyl-5-thio-alpha-D-ribose 1-phosphate from S-methyl-5'-thioadenosine (hydrolase route): step 1/2. Catalyzes the irreversible cleavage of the glycosidic bond in both 5'-methylthioadenosine (MTA) and S-adenosylhomocysteine (SAH/AdoHcy) to adenine and the corresponding thioribose, 5'-methylthioribose and S-ribosylhomocysteine, respectively. Also cleaves 5'-deoxyadenosine, a toxic by-product of radical S-adenosylmethionine (SAM) enzymes, into 5-deoxyribose and adenine. Thus, is required for in vivo function of the radical SAM enzymes biotin synthase and lipoic acid synthase, that are inhibited by 5'-deoxyadenosine accumulation. The polypeptide is 5'-methylthioadenosine/S-adenosylhomocysteine nucleosidase (Salmonella choleraesuis (strain SC-B67)).